Reading from the N-terminus, the 256-residue chain is Major prion protein (256 aa).

The signal sequence occupies residues 1-24; it reads MVKSHIGSWILVLFVAMWSDVGLC. The interval 25–233 is interaction with GRB2, ERI3 and SYN1; the sequence is KKRPKPGGGW…ESQAYYQRGA (209 aa). A disordered region spans residues 28–110; it reads PKPGGGWNTG…QWNKPSKPKT (83 aa). Tandem repeats lie at residues 54-62, 63-70, 71-78, 79-86, and 87-95. A 5 X 8 AA tandem repeats of P-H-G-G-G-W-G-Q region spans residues 54-95; that stretch reads PQGGGGWGQPHGGGWGQPHGGGWGQPHGGGWGQPHGGGGWGQ. The segment covering 55–97 has biased composition (gly residues); that stretch reads QGGGGWGQPHGGGWGQPHGGGWGQPHGGGWGQPHGGGGWGQGG. 12 residues coordinate Cu(2+): histidine 64, glycine 65, glycine 66, histidine 72, glycine 73, glycine 74, histidine 80, glycine 81, glycine 82, histidine 88, glycine 90, and glycine 91. A disulfide bridge links cysteine 182 with cysteine 217. N-linked (GlcNAc...) asparagine glycosylation is found at asparagine 184 and asparagine 200. Alanine 233 carries the GPI-anchor amidated alanine lipid modification. A propeptide spans 234 to 256 (removed in mature form); it reads SVILFSSPPVILLISFLIFLIVG.

This sequence belongs to the prion family. Monomer and homodimer. Has a tendency to aggregate into amyloid fibrils containing a cross-beta spine, formed by a steric zipper of superposed beta-strands. Soluble oligomers may represent an intermediate stage on the path to fibril formation. Copper binding may promote oligomerization. Interacts with GRB2, APP, ERI3/PRNPIP and SYN1. Mislocalized cytosolically exposed PrP interacts with MGRN1; this interaction alters MGRN1 subcellular location and causes lysosomal enlargement. Interacts with KIAA1191.

The protein resides in the cell membrane. It is found in the golgi apparatus. Its function is as follows. Its primary physiological function is unclear. Has cytoprotective activity against internal or environmental stresses. May play a role in neuronal development and synaptic plasticity. May be required for neuronal myelin sheath maintenance. May play a role in iron uptake and iron homeostasis. Soluble oligomers are toxic to cultured neuroblastoma cells and induce apoptosis (in vitro). Association with GPC1 (via its heparan sulfate chains) targets PRNP to lipid rafts. Also provides Cu(2+) or Zn(2+) for the ascorbate-mediated GPC1 deaminase degradation of its heparan sulfate side chains. The sequence is that of Major prion protein (PRNP) from Odocoileus hemionus (Mule deer).